The primary structure comprises 354 residues: Carbonic anhydrase 12 (354 aa).

The signal sequence occupies residues 1 to 24 (MPHRSLRATVVLLLVILKKQPSSS). At 25 to 301 (APLNGSKWTY…QGLLTDTGLS (277 aa)) the chain is on the extracellular side. 4 N-linked (GlcNAc...) asparagine glycosylation sites follow: Asn28, Asn42, Asn80, and Asn88. The Alpha-carbonic anhydrase domain occupies 30–290 (SKWTYVGPAG…FDERLVYISF (261 aa)). Cys50 and Cys231 are oxidised to a cystine. The Proton donor/acceptor role is filled by His94. Residues His120, His122, and His146 each contribute to the Zn(2+) site. Residue 227–228 (TT) participates in substrate binding. A helical transmembrane segment spans residues 302-322 (LGIILSVALAGVLGISIVLAV). Residues 323-354 (SIWLFKRKKSKKGDNKGVIYKPAIKKEAEVHA) lie on the Cytoplasmic side of the membrane.

Belongs to the alpha-carbonic anhydrase family. In terms of assembly, homodimer. Zn(2+) serves as cofactor.

The protein localises to the membrane. It is found in the cell membrane. It catalyses the reaction hydrogencarbonate + H(+) = CO2 + H2O. Its activity is regulated as follows. Inhibited by acetazolamide. Its function is as follows. Reversible hydration of carbon dioxide. In Mus musculus (Mouse), this protein is Carbonic anhydrase 12.